Here is a 259-residue protein sequence, read N- to C-terminus: Ribonuclease T2-B (259 aa).

Residues 1–29 (MAPAEARGALPGWISVLGWGLALCSLCGA) form the signal peptide. A disulfide bridge links C53 with C59. H69 is a catalytic residue. 3 disulfide bridges follow: C79-C125, C188-C244, and C206-C217. 2 N-linked (GlcNAc...) asparagine glycosylation sites follow: N80 and N110. Residues E118 and H122 contribute to the active site. Residue N216 is glycosylated (N-linked (GlcNAc...) asparagine).

Belongs to the RNase T2 family.

The protein localises to the secreted. Its subcellular location is the lysosome lumen. It localises to the endoplasmic reticulum lumen. It is found in the mitochondrion intermembrane space. It carries out the reaction a ribonucleotidyl-ribonucleotide-RNA + H2O = a 3'-end 3'-phospho-ribonucleotide-RNA + a 5'-end dephospho-ribonucleoside-RNA + H(+). The catalysed reaction is an adenylyl-uridine-RNA = a 3'-end 2',3'-cyclophospho-AMP-RNA + a 5'-end dephospho-uridine-RNA. It catalyses the reaction a guanylyl-uridine-RNA = a 3'-end 2',3'-cyclophospho-GMP-RNA + a 5'-end dephospho-uridine-RNA. Its activity is regulated as follows. Inhibited by Zn(2+) and Cu(2+). In terms of biological role, ribonuclease that plays an essential role in innate immune response by recognizing and degrading RNAs from microbial pathogens that are subsequently sensed by TLR8. Cleaves preferentially single-stranded RNA molecules between purine and uridine residues, which critically contributes to the supply of catabolic uridine and the generation of purine-2',3'-cyclophosphate-terminated oligoribonucleotides. In turn, RNase T2 degradation products promote the RNA-dependent activation of TLR8. In plasmacytoid dendritic cells, it cooperates with PLD3 or PLD4 5'-&gt;3' exonucleases to process RNA fragments and release 2',3'-cyclic guanosine monophosphate (2',3'-cGMP), a potent stimulatory ligand for TLR7. Also plays a key role in degradation of mitochondrial RNA and processing of non-coding RNA imported from the cytosol into mitochondria. Participates as well in degradation of mitochondrion-associated cytosolic rRNAs. This Mus musculus (Mouse) protein is Ribonuclease T2-B.